Consider the following 356-residue polypeptide: ATP-dependent 6-phosphofructokinase (356 aa).

ATP contacts are provided by residues G15, 78–79 (KG), and 115–118 (GEGT). E116 contributes to the Mg(2+) binding site. Residues 138 to 140 (TID), R175, 182 to 184 (MGR), E235, R272, and 278 to 281 (HLQR) each bind substrate. D140 functions as the Proton acceptor in the catalytic mechanism.

This sequence belongs to the phosphofructokinase type A (PFKA) family. Mixed-substrate PFK group III subfamily. Homodimer or homotetramer. The cofactor is Mg(2+).

It is found in the cytoplasm. The enzyme catalyses beta-D-fructose 6-phosphate + ATP = beta-D-fructose 1,6-bisphosphate + ADP + H(+). Its pathway is carbohydrate degradation; glycolysis; D-glyceraldehyde 3-phosphate and glycerone phosphate from D-glucose: step 3/4. Catalyzes the phosphorylation of D-fructose 6-phosphate to fructose 1,6-bisphosphate by ATP, the first committing step of glycolysis. In Chloroflexus aurantiacus (strain ATCC 29366 / DSM 635 / J-10-fl), this protein is ATP-dependent 6-phosphofructokinase.